A 611-amino-acid chain; its full sequence is Putative type II restriction enzyme HgiDII (611 aa).

The segment covering 355-364 (YPSNPKKEEV) has biased composition (basic and acidic residues). The disordered stretch occupies residues 355–434 (YPSNPKKEEV…PEPSPPPKQE (80 aa)). Residues 381–409 (TNASSDSSTATENASSDSSTATENASSET) are compositionally biased toward low complexity. A run of 2 repeats spans residues 382 to 392 (NASSDSSTATE) and 393 to 403 (NASSDSSTATE). Residues 382 to 403 (NASSDSSTATENASSDSSTATE) are 2.5 X 11 AA tandem repeats. A 3; truncated repeat occupies 404 to 409 (NASSET). Positions 410–425 (NDGEVEDNSFFDDDIP) are enriched in acidic residues.

It carries out the reaction Endonucleolytic cleavage of DNA to give specific double-stranded fragments with terminal 5'-phosphates.. Functionally, according to REBASE this is a P subtype restriction enzyme that recognizes the double-stranded sequence 5'-GTCGAC-3' and cleaves after G-1. No restriction activity was detected upon overexpressing this protein in E.coli. This is Putative type II restriction enzyme HgiDII from Herpetosiphon aurantiacus (Herpetosiphon giganteus).